The sequence spans 546 residues: MEQLKTPQNQKTRPRNMLPKKKGKELKKRPCKVKRKLFGSENIRPNKKIPLASDVDNELEKKRGSMIRKRSETDLCPDPSVTDLLCHESLTVSPKFERDGLSACTEFENFMDTRKIVLSRNEKSVTDLSAHYPVLCNLGIFERIHSPFLFSIHIDTQSFSVVYVPHKESSCSQFCEPEKNMARILGSGSYGMVYDLNNVAIKASDDLESCISSYVSGVVRAKAGAQLTSRECVFKSLLICNSVCLNHKISLSKTYDTDLYKFTDWKLENVENYYSIFCNLAEAVRFLNMVCKINHCDISLANILIHHKEGIILEAVLADYSLAEVHPQYNGKCGILRQFDHRIQIVPKSYNKLCDMFNPGFRPMIAHKIILVEVYAEFDGKGNPVRHCNLDLCALAQVFLLCVIRMLDERGCREAQKYYENRLFTYSNEACTLNPIKYPLEYKDACCKVLAEHLVLFGILFYREVVDMFENLYDFLHASGDLSVRDLLEETYVNDSRDVRRQPIRYRHAQLQRHEIGQILLNDLQQLLSIITISDLEKDPYSVFRV.

Residues 1-11 are compositionally biased toward polar residues; the sequence is MEQLKTPQNQK. The segment at 1-29 is disordered; sequence MEQLKTPQNQKTRPRNMLPKKKGKELKKR. A compositionally biased stretch (basic residues) spans 12 to 29; it reads TRPRNMLPKKKGKELKKR. ATP-binding positions include 185–193 and lysine 202; that span reads LGSGSYGMV. Residue aspartate 297 is the Proton acceptor of the active site.

This sequence belongs to the protein kinase superfamily. Tyr protein kinase family. HCMV ganciclovir subfamily.

Its function is as follows. Phosphorylates the antiviral nucleoside analog ganciclovir. The polypeptide is Probable ganciclovir kinase (U69) (Human herpesvirus 7 (strain JI) (HHV-7)).